The sequence spans 283 residues: Adenylate dimethylallyltransferase (283 aa).

Belongs to the isopentenyl transferase family.

The enzyme catalyses dimethylallyl diphosphate + AMP = N(6)-(dimethylallyl)adenosine 5'-phosphate + diphosphate. Transfers dimethylallyl groups to AMP as part of the biosynthesis of cytokinin phytohormones like isopentenyl adenine or discadenine which controle spore formation and viability. The sequence is that of Adenylate dimethylallyltransferase (iptA) from Dictyostelium discoideum (Social amoeba).